The chain runs to 182 residues: Pyruvoyl-dependent arginine decarboxylase (182 aa).

Serine 44 is modified (pyruvic acid (Ser)).

This sequence belongs to the PdaD family. Pyruvate is required as a cofactor.

The catalysed reaction is L-arginine + H(+) = agmatine + CO2. The sequence is that of Pyruvoyl-dependent arginine decarboxylase from Picrophilus torridus (strain ATCC 700027 / DSM 9790 / JCM 10055 / NBRC 100828 / KAW 2/3).